A 430-amino-acid chain; its full sequence is MKQALRVAFGFLILWASVLHAEVRIVIDSGVDSGRPIGVVPFQWAGPGAAPEDIGGIVAADLRNSGKFNPLDRARLPQQPGSAQEVQPAAWSALGIDAVVVGQVTPNPDGSYNVAYQLVDTGGAPGTVLAQNSYKVNKQWLRYAGHTASDEVFEKLTGIKGAFRTRIAYVVQTNGGQFPYELRVSDYDGYNQFVVHRSPHPLMSPAWSPDGSKLAYVTFESGRSALVIQTLANGAVRQVASFPRHNGAPAFSPDGSKLAFALSKTGSLNLYVMDLASGQIRQVTDGRSNNTEPTWFPDSQNLAFTSDLAGRPQVYKVNINGGAPQRITWEGSQNQDADVSSDGKFMVMVSSNGGQQHIAKQDLATGGVQVLSSTFLDETPSLAPNGTMVIYSSSQGMGSVLNLVSTDGRFKARLPATDGQVKFPAWSPYL.

Positions 1–21 (MKQALRVAFGFLILWASVLHA) are cleaved as a signal peptide.

This sequence belongs to the TolB family. The Tol-Pal system is composed of five core proteins: the inner membrane proteins TolA, TolQ and TolR, the periplasmic protein TolB and the outer membrane protein Pal. They form a network linking the inner and outer membranes and the peptidoglycan layer.

It localises to the periplasm. In terms of biological role, part of the Tol-Pal system, which plays a role in outer membrane invagination during cell division and is important for maintaining outer membrane integrity. TolB occupies a key intermediary position in the Tol-Pal system because it communicates directly with both membrane-embedded components, Pal in the outer membrane and TolA in the inner membrane. This Shigella flexneri protein is Tol-Pal system protein TolB.